The following is a 618-amino-acid chain: Pyranose 2-oxidase (618 aa).

The residue at position 170 (His170) is a Tele-8alpha-FAD histidine. Substrate-binding residues include Gln441 and His443. His540 serves as the catalytic Proton acceptor. Asn583 is a catalytic residue.

It belongs to the GMC oxidoreductase family. Homotetramer. Requires FAD as cofactor.

It carries out the reaction D-glucose + O2 = 2-dehydro-D-glucose + H2O2. In terms of biological role, catalyzes the oxidation of various aldopyranoses and disaccharides on carbon-2 to the corresponding 2-keto sugars concomitant with the reduction of O(2) to H(2)O(2). The polypeptide is Pyranose 2-oxidase (p2ox) (Lyophyllum shimeji (Hon-shimeji)).